The following is a 448-amino-acid chain: Phosphoglucosamine mutase (448 aa).

Ser-100 serves as the catalytic Phosphoserine intermediate. Mg(2+) is bound by residues Ser-100, Asp-240, Asp-242, and Asp-244. Ser-100 is subject to Phosphoserine.

Belongs to the phosphohexose mutase family. Mg(2+) is required as a cofactor. In terms of processing, activated by phosphorylation.

It catalyses the reaction alpha-D-glucosamine 1-phosphate = D-glucosamine 6-phosphate. In terms of biological role, catalyzes the conversion of glucosamine-6-phosphate to glucosamine-1-phosphate. This Bacillus anthracis (strain A0248) protein is Phosphoglucosamine mutase.